We begin with the raw amino-acid sequence, 144 residues long: Large ribosomal subunit protein uL16 (144 aa).

It belongs to the universal ribosomal protein uL16 family. In terms of assembly, part of the 50S ribosomal subunit.

Its function is as follows. Binds 23S rRNA and is also seen to make contacts with the A and possibly P site tRNAs. This is Large ribosomal subunit protein uL16 from Acidobacterium capsulatum (strain ATCC 51196 / DSM 11244 / BCRC 80197 / JCM 7670 / NBRC 15755 / NCIMB 13165 / 161).